The chain runs to 571 residues: Probable pectinesterase/pectinesterase inhibitor 58 (571 aa).

The first 28 residues, 1–28, serve as a signal peptide directing secretion; sequence MGVDGELKKKKCIIAGVITALLVLMVVA. N36, N91, N207, and N216 each carry an N-linked (GlcNAc...) asparagine glycan. The interval 49-204 is pectinesterase inhibitor 58; the sequence is KTATTAVEAV…RELTSNGLAM (156 aa). Positions 259–556 are pectinesterase 58; that stretch reads NVVVAHDGSG…FTPARFLRGN (298 aa). Residue T335 coordinates substrate. N347 is a glycosylation site (N-linked (GlcNAc...) asparagine). Residue Q365 participates in substrate binding. The Proton donor; for pectinesterase activity role is filled by D388. An intrachain disulfide couples C402 to C422. D409 acts as the Nucleophile; for pectinesterase activity in catalysis. The substrate site is built by R477 and W479.

It in the N-terminal section; belongs to the PMEI family. This sequence in the C-terminal section; belongs to the pectinesterase family. Expressed in siliques, but not in flower buds.

It localises to the secreted. It is found in the cell wall. It carries out the reaction [(1-&gt;4)-alpha-D-galacturonosyl methyl ester](n) + n H2O = [(1-&gt;4)-alpha-D-galacturonosyl](n) + n methanol + n H(+). It functions in the pathway glycan metabolism; pectin degradation; 2-dehydro-3-deoxy-D-gluconate from pectin: step 1/5. Acts in the modification of cell walls via demethylesterification of cell wall pectin. The protein is Probable pectinesterase/pectinesterase inhibitor 58 (PME58) of Arabidopsis thaliana (Mouse-ear cress).